Consider the following 243-residue polypeptide: Ubiquinone/menaquinone biosynthesis C-methyltransferase UbiE (243 aa).

Residues Thr-69, Asp-90, and 116 to 117 (DA) contribute to the S-adenosyl-L-methionine site.

This sequence belongs to the class I-like SAM-binding methyltransferase superfamily. MenG/UbiE family.

It catalyses the reaction a 2-demethylmenaquinol + S-adenosyl-L-methionine = a menaquinol + S-adenosyl-L-homocysteine + H(+). The catalysed reaction is a 2-methoxy-6-(all-trans-polyprenyl)benzene-1,4-diol + S-adenosyl-L-methionine = a 5-methoxy-2-methyl-3-(all-trans-polyprenyl)benzene-1,4-diol + S-adenosyl-L-homocysteine + H(+). The protein operates within quinol/quinone metabolism; menaquinone biosynthesis; menaquinol from 1,4-dihydroxy-2-naphthoate: step 2/2. It participates in cofactor biosynthesis; ubiquinone biosynthesis. Its function is as follows. Methyltransferase required for the conversion of demethylmenaquinol (DMKH2) to menaquinol (MKH2) and the conversion of 2-polyprenyl-6-methoxy-1,4-benzoquinol (DDMQH2) to 2-polyprenyl-3-methyl-6-methoxy-1,4-benzoquinol (DMQH2). The chain is Ubiquinone/menaquinone biosynthesis C-methyltransferase UbiE from Cupriavidus pinatubonensis (strain JMP 134 / LMG 1197) (Cupriavidus necator (strain JMP 134)).